The chain runs to 582 residues: Fructose-1,6-bisphosphatase class 3 (582 aa).

The protein belongs to the FBPase class 3 family. Mn(2+) serves as cofactor.

The enzyme catalyses beta-D-fructose 1,6-bisphosphate + H2O = beta-D-fructose 6-phosphate + phosphate. Its pathway is carbohydrate biosynthesis; gluconeogenesis. The sequence is that of Fructose-1,6-bisphosphatase class 3 from Saccharophagus degradans (strain 2-40 / ATCC 43961 / DSM 17024).